A 288-amino-acid chain; its full sequence is Aquaporin PIP2-4 (288 aa).

The segment at 1-24 (MAKDIEASGPEAGEFSAKDYTDPP) is disordered. Transmembrane regions (helical) follow at residues 42–62 (AVIA…ATVI) and 79–99 (CGGV…FILV). The short motif at 111-113 (NPA) is the NPA 1 element. Helical transmembrane passes span 130–150 (LLYI…VKGF), 172–192 (GTGL…VFSA), and 206–226 (VLAP…TIPI). Residues 232 to 234 (NPA) carry the NPA 2 motif. The chain crosses the membrane as a helical span at residues 254 to 274 (IFWVGPLIGAAIAAAYHQYVL).

It belongs to the MIP/aquaporin (TC 1.A.8) family. PIP (TC 1.A.8.11) subfamily. As to quaternary structure, homomers. May interact with PIP1-2 to form heteromers. Expressed in the root growing zone at 5-6 mm from the root tip.

It localises to the cell membrane. Its function is as follows. Water channel required to facilitate the transport of water across cell membrane. Active as homomers. Increased activity when heteromerization with PIP1-2. The sequence is that of Aquaporin PIP2-4 (PIP2-4) from Zea mays (Maize).